Reading from the N-terminus, the 150-residue chain is UPF0756 membrane protein HD_1071 (150 aa).

A run of 4 helical transmembrane segments spans residues 1–21 (MSLQ…LGVL), 52–72 (YGLT…IVSG), 82–102 (ILSW…WLGG), and 114–134 (IITG…GIPV).

It belongs to the UPF0756 family.

It localises to the cell membrane. In Haemophilus ducreyi (strain 35000HP / ATCC 700724), this protein is UPF0756 membrane protein HD_1071.